Consider the following 506-residue polypeptide: Maturase K (506 aa).

It belongs to the intron maturase 2 family. MatK subfamily.

Its subcellular location is the plastid. It localises to the chloroplast. Functionally, usually encoded in the trnK tRNA gene intron. Probably assists in splicing its own and other chloroplast group II introns. The chain is Maturase K from Jasminum nudiflorum (Winter jasmine).